We begin with the raw amino-acid sequence, 137 residues long: Large ribosomal subunit protein uL16 (137 aa).

It belongs to the universal ribosomal protein uL16 family. As to quaternary structure, part of the 50S ribosomal subunit.

Binds 23S rRNA and is also seen to make contacts with the A and possibly P site tRNAs. The sequence is that of Large ribosomal subunit protein uL16 from Cellvibrio japonicus (strain Ueda107) (Pseudomonas fluorescens subsp. cellulosa).